The chain runs to 110 residues: UPF0060 membrane protein Nmul_A0351 (110 aa).

The next 4 helical transmembrane spans lie at 7–27, 33–53, 63–83, and 87–107; these read LFLF…PYLW, SAWL…LLTL, AAYG…VDGV, and AWDM…MFGP.

This sequence belongs to the UPF0060 family.

The protein resides in the cell inner membrane. This is UPF0060 membrane protein Nmul_A0351 from Nitrosospira multiformis (strain ATCC 25196 / NCIMB 11849 / C 71).